The primary structure comprises 330 residues: 2-methoxy-6-polyprenyl-1,4-benzoquinol methylase, mitochondrial (330 aa).

The transit peptide at 1 to 42 (MAAPRSWALWSFCGCGWSRAVSGCRLPGLRSSSPRGPLGARL) directs the protein to the mitochondrion. S-adenosyl-L-methionine is bound by residues Thr-117, Asp-171, and 199–200 (DA).

The protein belongs to the class I-like SAM-binding methyltransferase superfamily. MenG/UbiE family. In terms of assembly, component of a multi-subunit COQ enzyme complex, composed of at least COQ3, COQ4, COQ5, COQ6, COQ7 and COQ9. Interacts with PYURF; the interaction is direct, stabilizes COQ5 protein and associates PYURF with COQ enzyme complex.

It is found in the mitochondrion inner membrane. It carries out the reaction 2-methoxy-6-(all-trans-decaprenyl)benzene-1,4-diol + S-adenosyl-L-methionine = 5-methoxy-2-methyl-3-(all-trans-decaprenyl)benzene-1,4-diol + S-adenosyl-L-homocysteine + H(+). It functions in the pathway cofactor biosynthesis; ubiquinone biosynthesis. Its function is as follows. Methyltransferase required for the conversion of 2-decaprenyl-6-methoxy-1,4-benzoquinol (DDMQH2) to 2-decaprenyl-3-methyl-6-methoxy-1,4-benzoquinol (DMQH2). The chain is 2-methoxy-6-polyprenyl-1,4-benzoquinol methylase, mitochondrial from Bos taurus (Bovine).